The sequence spans 214 residues: Lazarillo protein (214 aa).

An N-terminal signal peptide occupies residues 1 to 21; it reads MIRRGLLSVTAALVLLSVSCS. Asparagine 38, asparagine 74, asparagine 84, asparagine 90, asparagine 130, asparagine 158, and asparagine 161 each carry an N-linked (GlcNAc...) asparagine glycan. A lipid anchor (GPI-anchor amidated alanine) is attached at alanine 192. Positions 193 to 214 are cleaved as a propeptide — removed in mature form; sequence GAEHVVGAMLSVAIASLFALLH.

It belongs to the calycin superfamily. Lipocalin family. N-glycosylated. Post-translationally, contains disulfide bonds. As to expression, expressed by a subset of neuroblasts, ganglion mother cells and neurons of the CNS; by all sensory neurons of the PNS.

The protein localises to the cell membrane. In terms of biological role, putative role in axonal outgrowth and guidance, required for the navigation of identified commissural neurons. Could be a receptor the midline morphogen. The sequence is that of Lazarillo protein from Schistocerca americana (American grasshopper).